The sequence spans 166 residues: Small ribosomal subunit protein uS5 (166 aa).

The 64-residue stretch at 11-74 folds into the S5 DRBM domain; that stretch reads LIEKLVSVKR…ENAKKNMVSV (64 aa).

This sequence belongs to the universal ribosomal protein uS5 family. As to quaternary structure, part of the 30S ribosomal subunit. Contacts proteins S4 and S8.

Functionally, with S4 and S12 plays an important role in translational accuracy. Located at the back of the 30S subunit body where it stabilizes the conformation of the head with respect to the body. This Francisella tularensis subsp. tularensis (strain FSC 198) protein is Small ribosomal subunit protein uS5.